Consider the following 1358-residue polypeptide: Nonribosomal peptide synthetase rstn8 (1358 aa).

Residues 1–23 (MSHSSHYSPVDSGMVPSSSSTED) are disordered. Positions 261-659 (YRELDRLSSR…LGEVEYRLHQ (399 aa)) are adenylation. Residues 795 to 872 (ETVSPAESTL…DQASLVRPLV (78 aa)) enclose the Carrier domain. At Ser832 the chain carries O-(pantetheine 4'-phosphoryl)serine. Positions 909–1322 (EDIYPCTPLQ…DDYSQALHEL (414 aa)) are condensation.

This sequence belongs to the NRP synthetase family. Pantetheine 4'-phosphate serves as cofactor.

The enzyme catalyses restrictinol + glycine + H(+) = restricticin + H2O. It functions in the pathway antifungal biosynthesis. Its function is as follows. Nonribosomal peptide synthetase; part of the gene cluster that mediates the biosynthesis of the tetrahydropyranyl antifungal agent restricticin that acts as an inhibitor of CYP51 and blocks the ergosterol biosynthesis. Within the pathway, rstn8 catalyzes the C3 esterification of restrictinol with glycine to yield restricticin. Rstn8 represents an example of the emerging class of single-module NRPS-like enzymes that perform esterification reactions. Rstn8 displays strict substrate specificity toward glycine as no other natural amino acid is accepted. Rstn8 does not recognize desmethylrestrictinol as a substrate, demonstrating that rstn1-catalyzed methylation, possibly protecting the C4-OH, must precede the final esterification step. The highly reducing polyketide synthase rstn3, the short chain dehydrogenase rstn4, the cyclase rstn5, the FAD-dependent monooxygenase rstn6 and the enoylreductase rstn7 are required to generate the first stable intermediate desmethylrestrictinol. Rstn3 with rstn7 biosynthesize the first polyketide chain intermediate that is reduced by rstn4, followed by epoxidation by rstn6 before 6-endo cyclization via epoxide opening by rstn5 leads to desmethylrestrictinol. The methyltransferase rstn1 then catalyzes the C4 O-methylation of desmethylrestrictinol to produce restrictinol, and the nonribosomal peptide synthetase rstn8 catalyzes the C3 esterification of restrictinol with glycine that leads to restricticin. In Aspergillus nomiae NRRL (strain ATCC 15546 / NRRL 13137 / CBS 260.88 / M93), this protein is Nonribosomal peptide synthetase rstn8.